The chain runs to 351 residues: SKP1-like protein 21 (351 aa).

The segment at 108 to 167 is interaction with the F-box domain of F-box proteins; it reads TSAADSLQLKPLVDLTSRALARIIEGKTPEEIREIFHLPDDLTEEEKLEPLKNTMDDPRI. Disordered regions lie at residues 216–240 and 330–351; these read VKTSKSKKKNKKRKEQKNGSSNGTC and VNFSINGNGTSRRLTGPAAGHK. The span at 217 to 230 shows a compositional bias: basic residues; the sequence is KTSKSKKKNKKRKE. A compositionally biased stretch (polar residues) spans 330–342; the sequence is VNFSINGNGTSRR.

It belongs to the SKP1 family. Part of a SCF (SKP1-cullin-F-box) protein ligase complex. Expressed in young seedlings, roots, leaves, floral stems, inflorescences, and siliques.

The protein resides in the nucleus. It functions in the pathway protein modification; protein ubiquitination. Involved in ubiquitination and subsequent proteasomal degradation of target proteins. Together with CUL1, RBX1 and a F-box protein, it forms a SCF E3 ubiquitin ligase complex. The functional specificity of this complex depends on the type of F-box protein. In the SCF complex, it serves as an adapter that links the F-box protein to CUL1. In Arabidopsis thaliana (Mouse-ear cress), this protein is SKP1-like protein 21 (ASK21).